Reading from the N-terminus, the 364-residue chain is Chorismate synthase (364 aa).

Residue R48 coordinates NADP(+). Residues 125–127, 237–238, G277, 292–296, and R318 each bind FMN; these read RSS, NA, and KPTSS.

Belongs to the chorismate synthase family. Homotetramer. The cofactor is FMNH2.

The enzyme catalyses 5-O-(1-carboxyvinyl)-3-phosphoshikimate = chorismate + phosphate. Its pathway is metabolic intermediate biosynthesis; chorismate biosynthesis; chorismate from D-erythrose 4-phosphate and phosphoenolpyruvate: step 7/7. Functionally, catalyzes the anti-1,4-elimination of the C-3 phosphate and the C-6 proR hydrogen from 5-enolpyruvylshikimate-3-phosphate (EPSP) to yield chorismate, which is the branch point compound that serves as the starting substrate for the three terminal pathways of aromatic amino acid biosynthesis. This reaction introduces a second double bond into the aromatic ring system. This is Chorismate synthase from Albidiferax ferrireducens (strain ATCC BAA-621 / DSM 15236 / T118) (Rhodoferax ferrireducens).